The primary structure comprises 285 residues: MDIFLAILPAIFWGSIVLFNVKLGGGPYSQTLGTTFGALIFSIVVYIFMKPVLTPTVIGVGIVSGLFWALGQANQLKSIDLMGVSRTMPISTGLQLVATTLFGVIVFHEWSTTISVVLGVLALVCIIIGVILTSLQSEEEKNAEQAGNFKRGIIILLISTVGYLVYVVVIRLFNVDGWSALLPQAVGMVLGGILLTFKHHPFNKYAIRNIIPGLIWAAGNMFLFISQPRVGVATSFSLSQMGIIISTLGGILILGERKTKRQLTGIVVGIVFIIAAGIMLGIAKS.

10 consecutive transmembrane segments (helical) span residues 4–21, 26–48, 52–71, 84–106, 110–132, 153–175, 180–197, 210–227, 232–254, and 266–283; these read FLAI…LFNV, GPYS…VYIF, VLTP…WALG, VSRT…GVIV, WSTT…GVIL, IIIL…LFNV, ALLP…LLTF, IIPG…FISQ, VATS…ILIL, and IVVG…LGIA.

Belongs to the GRP transporter (TC 2.A.7.5) family.

The protein localises to the cell membrane. In terms of biological role, involved in the uptake of glucose. The polypeptide is Probable glucose uptake protein GlcU (glcU) (Bacillus cereus (strain ATCC 10987 / NRS 248)).